The sequence spans 344 residues: tRNA N6-adenosine threonylcarbamoyltransferase (344 aa).

Positions 118 and 122 each coordinate Fe cation. Substrate is bound by residues 141 to 145 (TASGG), Asp174, Gly187, and Asn284. Asp312 lines the Fe cation pocket.

This sequence belongs to the KAE1 / TsaD family. The cofactor is Fe(2+).

The protein localises to the cytoplasm. It catalyses the reaction L-threonylcarbamoyladenylate + adenosine(37) in tRNA = N(6)-L-threonylcarbamoyladenosine(37) in tRNA + AMP + H(+). Functionally, required for the formation of a threonylcarbamoyl group on adenosine at position 37 (t(6)A37) in tRNAs that read codons beginning with adenine. Is involved in the transfer of the threonylcarbamoyl moiety of threonylcarbamoyl-AMP (TC-AMP) to the N6 group of A37, together with TsaE and TsaB. TsaD likely plays a direct catalytic role in this reaction. The protein is tRNA N6-adenosine threonylcarbamoyltransferase of Desulfotalea psychrophila (strain LSv54 / DSM 12343).